The sequence spans 571 residues: Acetolactate synthase large subunit (571 aa).

Residue E51 participates in thiamine diphosphate binding. Residues R153, 261 to 282, and 304 to 323 each bind FAD; these read HGTY…IGVR and DIDP…IVGD. The interval 394 to 474 is thiamine pyrophosphate binding; it reads QHQMFTALYY…VLILNLNNSS (81 aa). Residues D445 and N472 each coordinate Mg(2+).

The protein belongs to the TPP enzyme family. As to quaternary structure, dimer of large and small chains. It depends on Mg(2+) as a cofactor. Thiamine diphosphate serves as cofactor.

It carries out the reaction 2 pyruvate + H(+) = (2S)-2-acetolactate + CO2. It functions in the pathway amino-acid biosynthesis; L-isoleucine biosynthesis; L-isoleucine from 2-oxobutanoate: step 1/4. Its pathway is amino-acid biosynthesis; L-valine biosynthesis; L-valine from pyruvate: step 1/4. The polypeptide is Acetolactate synthase large subunit (ilvI) (Buchnera aphidicola subsp. Schizaphis graminum (strain Sg)).